Consider the following 635-residue polypeptide: Signal recognition particle subunit SRP72 (635 aa).

TPR repeat units lie at residues 7–42 (GGLY…YPKE), 75–105 (GHVG…DKDD), 106–139 (VKAL…HSDD), 171–204 (YSQL…CRKS), 220–253 (DSIR…NHPD), 255–290 (SVKA…DQTK), and 436–469 (VEVE…QCRL). A disordered region spans residues 539–635 (KRKRKIRLPK…QKKKKNASKF (97 aa)). Positions 557–569 (DPERWLPRQERST) are enriched in basic and acidic residues. Basic residues predominate over residues 625 to 635 (KQKKKKNASKF).

Belongs to the SRP72 family. In terms of assembly, heterodimer with srpa-68. Srpa-68-srpa-72 heterodimer formation is stabilized by the presence of 7SL RNA. Component of a signal recognition particle (SRP) complex that consists of a 7SL RNA molecule of 300 nucleotides and six protein subunits: srpa-72, srpa-68, SRP54, F37F2.2/SRP19, F25G6.8/SRP14 and ZK512.4/SRP9. Within the SRP complex, interacts (via N-terminus) with srpa-68 (via C-terminus).

It is found in the cytoplasm. The protein resides in the endoplasmic reticulum. In terms of biological role, component of the signal recognition particle (SRP) complex, a ribonucleoprotein complex that mediates the cotranslational targeting of secretory and membrane proteins to the endoplasmic reticulum (ER). The SRP complex interacts with the signal sequence in nascent secretory and membrane proteins and directs them to the membrane of the ER. The SRP complex targets the ribosome-nascent chain complex to the SRP receptor (SR), which is anchored in the ER, where SR compaction and GTPase rearrangement drive cotranslational protein translocation into the ER. Binds the signal recognition particle RNA (7SL RNA) in presence of srpa-68. Can bind 7SL RNA with low affinity. The SRP complex possibly participates in the elongation arrest function. This Caenorhabditis elegans protein is Signal recognition particle subunit SRP72.